A 198-amino-acid chain; its full sequence is Putative 3-methyladenine DNA glycosylase (198 aa).

It belongs to the DNA glycosylase MPG family.

The protein is Putative 3-methyladenine DNA glycosylase of Oceanobacillus iheyensis (strain DSM 14371 / CIP 107618 / JCM 11309 / KCTC 3954 / HTE831).